A 154-amino-acid polypeptide reads, in one-letter code: Myoglobin (154 aa).

Residues 2–148 (GLSDGEWQLV…FRNDIAAKYK (147 aa)) form the Globin domain. At S4 the chain carries Phosphoserine. H65 lines the nitrite pocket. H65 is an O2 binding site. T68 is modified (phosphothreonine). Heme b is bound at residue H94.

Belongs to the globin family. Monomeric.

It localises to the cytoplasm. The protein resides in the sarcoplasm. The catalysed reaction is Fe(III)-heme b-[protein] + nitric oxide + H2O = Fe(II)-heme b-[protein] + nitrite + 2 H(+). The enzyme catalyses H2O2 + AH2 = A + 2 H2O. Its function is as follows. Monomeric heme protein which primary function is to store oxygen and facilitate its diffusion within muscle tissues. Reversibly binds oxygen through a pentacoordinated heme iron and enables its timely and efficient release as needed during periods of heightened demand. Depending on the oxidative conditions of tissues and cells, and in addition to its ability to bind oxygen, it also has a nitrite reductase activity whereby it regulates the production of bioactive nitric oxide. Under stress conditions, like hypoxia and anoxia, it also protects cells against reactive oxygen species thanks to its pseudoperoxidase activity. The polypeptide is Myoglobin (MB) (Meles meles (Eurasian badger)).